The chain runs to 81 residues: Cytochrome b559 subunit alpha (81 aa).

The chain crosses the membrane as a helical span at residues 21-35 (VIHSITIPSLFVSGW). H23 is a binding site for heme.

It belongs to the PsbE/PsbF family. Heterodimer of an alpha subunit and a beta subunit. PSII is composed of 1 copy each of membrane proteins PsbA, PsbB, PsbC, PsbD, PsbE, PsbF, PsbH, PsbI, PsbJ, PsbK, PsbL, PsbM, PsbT, PsbX, PsbY, PsbZ, Psb30/Ycf12, at least 3 peripheral proteins of the oxygen-evolving complex and a large number of cofactors. It forms dimeric complexes. Requires heme b as cofactor.

It is found in the plastid. It localises to the chloroplast thylakoid membrane. Functionally, this b-type cytochrome is tightly associated with the reaction center of photosystem II (PSII). PSII is a light-driven water:plastoquinone oxidoreductase that uses light energy to abstract electrons from H(2)O, generating O(2) and a proton gradient subsequently used for ATP formation. It consists of a core antenna complex that captures photons, and an electron transfer chain that converts photonic excitation into a charge separation. This Mesostigma viride (Green alga) protein is Cytochrome b559 subunit alpha.